The primary structure comprises 200 residues: MAGLKQHSGLVVPLDAANVDTDAIIPKQFLQAITRVGFGKHLFHEWRYLDAEETRPNPEFVLNFPQYQGATILLARKNLGCGSSREHAPWALADYGFKVMIAPSFADIFYNNSLNNHMLPIKLSEQEVDEIFHWVWANPGKQIHVDLEAKTVTVGDKVYHFELDEFRRHCLLEGLDNIGLTLQHEDAIAAYEKKIPAFLR.

This sequence belongs to the LeuD family. LeuD type 1 subfamily. Heterodimer of LeuC and LeuD.

It catalyses the reaction (2R,3S)-3-isopropylmalate = (2S)-2-isopropylmalate. The protein operates within amino-acid biosynthesis; L-leucine biosynthesis; L-leucine from 3-methyl-2-oxobutanoate: step 2/4. Its function is as follows. Catalyzes the isomerization between 2-isopropylmalate and 3-isopropylmalate, via the formation of 2-isopropylmaleate. The chain is 3-isopropylmalate dehydratase small subunit from Actinobacillus succinogenes (strain ATCC 55618 / DSM 22257 / CCUG 43843 / 130Z).